The chain runs to 106 residues: Iron-sulfur cluster assembly protein CyaY (106 aa).

It belongs to the frataxin family.

Involved in iron-sulfur (Fe-S) cluster assembly. May act as a regulator of Fe-S biogenesis. The chain is Iron-sulfur cluster assembly protein CyaY from Salmonella dublin (strain CT_02021853).